The sequence spans 546 residues: Peroxisomal OPC-8:0-CoA ligase 1 (546 aa).

Residues Ser197, Ser198, Gly199, Thr200, Thr201, and Lys205 each coordinate ATP. Lys265 contributes to the CoA binding site. Residues 267–338 are SBD1; that stretch reads EMHEMMSAIG…EKYPTVKILQ (72 aa). Gln338, Gly339, Thr343, Asp424, and Arg439 together coordinate ATP. The interval 339–403 is SBD2; it reads GYGLTESTGI…LKGPSIMKGY (65 aa). The CoA site is built by Lys447 and Gly448. Lys530 lines the ATP pocket. A Microbody targeting signal motif is present at residues 544–546; it reads SKL.

It belongs to the ATP-dependent AMP-binding enzyme family. Mg(2+) serves as cofactor. Expressed at low levels in seedlings, cotyledons, leaves, hypocotyls and roots.

The protein localises to the peroxisome. It catalyses the reaction (9S,13S,15Z)-12-oxophyto-10,15-dienoate + ATP + CoA = (10Z,15Z)-12-oxophytodienoyl-CoA + AMP + diphosphate. The catalysed reaction is (1S,2S)-OPC-8 + ATP + CoA = OPC8-CoA + AMP + diphosphate. It carries out the reaction hexadecanoate + ATP + CoA = hexadecanoyl-CoA + AMP + diphosphate. The enzyme catalyses (9Z)-octadecenoate + ATP + CoA = (9Z)-octadecenoyl-CoA + AMP + diphosphate. It catalyses the reaction tetradecanoate + ATP + CoA = tetradecanoyl-CoA + AMP + diphosphate. The catalysed reaction is decanoate + ATP + CoA = decanoyl-CoA + AMP + diphosphate. It carries out the reaction dodecanoate + ATP + CoA = dodecanoyl-CoA + AMP + diphosphate. The enzyme catalyses octadecanoate + ATP + CoA = octadecanoyl-CoA + AMP + diphosphate. It catalyses the reaction OPC-6 + ATP + CoA = OPC-6-CoA + AMP + diphosphate. The catalysed reaction is dinor-OPDA + ATP + CoA = dinor-OPDA-CoA + AMP + diphosphate. In terms of biological role, contributes to jasmonic acid biosynthesis by initiating the beta-oxidative chain shortening of its precursors. Converts 12-oxo-phytodienoic acid (OPDA) and 3-oxo-2-(2'-pentenyl)-cyclopentane-1-octanoic acid (OPC-8:0) into OPDA-CoA and OPC-8:0-CoA, respectively. Follows a two-step reaction mechanism, wherein the carboxylate substrate first undergoes adenylation by ATP, followed by a thioesterification in the presence of CoA to yield the final CoA thioester. The chain is Peroxisomal OPC-8:0-CoA ligase 1 from Arabidopsis thaliana (Mouse-ear cress).